The chain runs to 154 residues: Crossover junction endodeoxyribonuclease RuvC (154 aa).

Active-site residues include Asp-7, Glu-67, and Asp-139. Asp-7, Glu-67, and Asp-139 together coordinate Mg(2+).

Belongs to the RuvC family. In terms of assembly, homodimer which binds Holliday junction (HJ) DNA. The HJ becomes 2-fold symmetrical on binding to RuvC with unstacked arms; it has a different conformation from HJ DNA in complex with RuvA. In the full resolvosome a probable DNA-RuvA(4)-RuvB(12)-RuvC(2) complex forms which resolves the HJ. The cofactor is Mg(2+).

Its subcellular location is the cytoplasm. The catalysed reaction is Endonucleolytic cleavage at a junction such as a reciprocal single-stranded crossover between two homologous DNA duplexes (Holliday junction).. Functionally, the RuvA-RuvB-RuvC complex processes Holliday junction (HJ) DNA during genetic recombination and DNA repair. Endonuclease that resolves HJ intermediates. Cleaves cruciform DNA by making single-stranded nicks across the HJ at symmetrical positions within the homologous arms, yielding a 5'-phosphate and a 3'-hydroxyl group; requires a central core of homology in the junction. The consensus cleavage sequence is 5'-(A/T)TT(C/G)-3'. Cleavage occurs on the 3'-side of the TT dinucleotide at the point of strand exchange. HJ branch migration catalyzed by RuvA-RuvB allows RuvC to scan DNA until it finds its consensus sequence, where it cleaves and resolves the cruciform DNA. The polypeptide is Crossover junction endodeoxyribonuclease RuvC (Synechococcus sp. (strain CC9605)).